Consider the following 274-residue polypeptide: Nitrogenase iron protein (274 aa).

Residue 8 to 15 (GKGGIGKS) participates in ATP binding. Cys-94 provides a ligand contact to [4Fe-4S] cluster. Arg-97 carries the ADP-ribosylarginine; by dinitrogenase reductase ADP-ribosyltransferase modification. Residue Cys-131 coordinates [4Fe-4S] cluster.

This sequence belongs to the NifH/BchL/ChlL family. In terms of assembly, homodimer. Requires [4Fe-4S] cluster as cofactor. The reversible ADP-ribosylation of Arg-97 inactivates the nitrogenase reductase and regulates nitrogenase activity.

It catalyses the reaction N2 + 8 reduced [2Fe-2S]-[ferredoxin] + 16 ATP + 16 H2O = H2 + 8 oxidized [2Fe-2S]-[ferredoxin] + 2 NH4(+) + 16 ADP + 16 phosphate + 6 H(+). Its function is as follows. The key enzymatic reactions in nitrogen fixation are catalyzed by the nitrogenase complex, which has 2 components: the iron protein and the molybdenum-iron protein. The polypeptide is Nitrogenase iron protein (Pelodictyon phaeoclathratiforme (strain DSM 5477 / BU-1)).